Consider the following 66-residue polypeptide: Large ribosomal subunit protein bL35 (66 aa).

This sequence belongs to the bacterial ribosomal protein bL35 family.

This chain is Large ribosomal subunit protein bL35, found in Synechococcus sp. (strain RCC307).